We begin with the raw amino-acid sequence, 137 residues long: Large ribosomal subunit protein uL16 (137 aa).

Belongs to the universal ribosomal protein uL16 family. As to quaternary structure, part of the 50S ribosomal subunit.

Its function is as follows. Binds 23S rRNA and is also seen to make contacts with the A and possibly P site tRNAs. This is Large ribosomal subunit protein uL16 from Cereibacter sphaeroides (strain ATCC 17029 / ATH 2.4.9) (Rhodobacter sphaeroides).